The following is a 458-amino-acid chain: L-hydantoinase (458 aa).

Positions 60, 62, 147, 183, 239, and 312 each coordinate Zn(2+). Residue Lys-147 is modified to N6-carboxylysine.

Homotetramer. Requires Zn(2+) as cofactor. In terms of processing, carboxylation allows a single lysine to coordinate two zinc ions.

Its function is as follows. Rather more predominant for the cleavage of aryl- than for alkyl-hydantoin derivatives. The stereoselectivity of this enzyme depends on the substrate used for bioconversion: strictly L-selective for the cleavage of D,L-5-indolylmethylhydantoin, but D-selective for the hydrolysis of D,L-methylthioethylhydantoin. This chain is L-hydantoinase (lhyD), found in Paenarthrobacter aurescens (Arthrobacter aurescens).